We begin with the raw amino-acid sequence, 433 residues long: Small ribosomal subunit biogenesis GTPase RsgA 1, mitochondrial (433 aa).

The segment at 1-20 is disordered; it reads MLRAKHIGKNYSSSLSPVLS. The 179-residue stretch at 113–291 folds into the CP-type G domain; sequence SEILDPPVAN…LADTPGFNQP (179 aa). 212 to 220 is a binding site for GTP; the sequence is GPSGVGKSS. Positions 317, 322, 324, and 330 each coordinate Zn(2+).

This sequence belongs to the TRAFAC class YlqF/YawG GTPase family. RsgA subfamily. Monomer. Associates with 30S ribosomal subunit, binds 16S rRNA. Zn(2+) is required as a cofactor.

The protein localises to the mitochondrion. In terms of biological role, one of several proteins that assist in the late maturation steps of the functional core of the 30S ribosomal subunit. Helps release RbfA from mature subunits. May play a role in the assembly of ribosomal proteins into the subunit. Circularly permuted GTPase that catalyzes slow GTP hydrolysis, GTPase activity is stimulated by the 30S ribosomal subunit. Required for embryo development. The sequence is that of Small ribosomal subunit biogenesis GTPase RsgA 1, mitochondrial from Arabidopsis thaliana (Mouse-ear cress).